Consider the following 751-residue polypeptide: Glutathione biosynthesis bifunctional protein GshAB (751 aa).

A glutamate--cysteine ligase region spans residues 1–336 (MELDAVGKAI…QADQLTRQVL (336 aa)).

It in the N-terminal section; belongs to the glutamate--cysteine ligase type 1 family. Type 2 subfamily. Monomer.

It carries out the reaction L-cysteine + L-glutamate + ATP = gamma-L-glutamyl-L-cysteine + ADP + phosphate + H(+). The enzyme catalyses gamma-L-glutamyl-L-cysteine + glycine + ATP = glutathione + ADP + phosphate + H(+). Its pathway is sulfur metabolism; glutathione biosynthesis; glutathione from L-cysteine and L-glutamate: step 1/2. It participates in sulfur metabolism; glutathione biosynthesis; glutathione from L-cysteine and L-glutamate: step 2/2. Synthesizes glutathione from L-glutamate and L-cysteine via gamma-L-glutamyl-L-cysteine. This Lactiplantibacillus plantarum (strain ATCC BAA-793 / NCIMB 8826 / WCFS1) (Lactobacillus plantarum) protein is Glutathione biosynthesis bifunctional protein GshAB (gshAB).